A 283-amino-acid chain; its full sequence is Protein boule-like (283 aa).

Residues 1 to 25 (MQTDSLSPSPNPVSPVPLNNPTSAP) are disordered. Residues 33–110 (NRIFVGGIDF…KKLNIGPAIR (78 aa)) enclose the RRM domain. Residues 160–184 (PSRSVCSSPVMVAQPIYQQPAYHYQ) enclose the DAZ domain.

The protein belongs to the RRM DAZ family. As to quaternary structure, interacts with DAZ1 and DAZL. Testis specific. Not expressed in early embryos, primordial germ cells and spermatogonial cells. First expressed in the cytoplasm of spermatocytes and then persists through meiosis.

The protein localises to the cytoplasm. In terms of biological role, probable RNA-binding protein, which may be required during spermatogenesis. May act by binding to the 3'-UTR of mRNAs and regulating their translation. The polypeptide is Protein boule-like (BOLL) (Homo sapiens (Human)).